A 366-amino-acid polypeptide reads, in one-letter code: UDP-N-acetylglucosamine--N-acetylmuramyl-(pentapeptide) pyrophosphoryl-undecaprenol N-acetylglucosamine transferase (366 aa).

UDP-N-acetyl-alpha-D-glucosamine contacts are provided by residues 15 to 17 (TGG), N127, R175, S201, I255, and Q300.

This sequence belongs to the glycosyltransferase 28 family. MurG subfamily.

The protein resides in the cell inner membrane. The enzyme catalyses di-trans,octa-cis-undecaprenyl diphospho-N-acetyl-alpha-D-muramoyl-L-alanyl-D-glutamyl-meso-2,6-diaminopimeloyl-D-alanyl-D-alanine + UDP-N-acetyl-alpha-D-glucosamine = di-trans,octa-cis-undecaprenyl diphospho-[N-acetyl-alpha-D-glucosaminyl-(1-&gt;4)]-N-acetyl-alpha-D-muramoyl-L-alanyl-D-glutamyl-meso-2,6-diaminopimeloyl-D-alanyl-D-alanine + UDP + H(+). It functions in the pathway cell wall biogenesis; peptidoglycan biosynthesis. Cell wall formation. Catalyzes the transfer of a GlcNAc subunit on undecaprenyl-pyrophosphoryl-MurNAc-pentapeptide (lipid intermediate I) to form undecaprenyl-pyrophosphoryl-MurNAc-(pentapeptide)GlcNAc (lipid intermediate II). The chain is UDP-N-acetylglucosamine--N-acetylmuramyl-(pentapeptide) pyrophosphoryl-undecaprenol N-acetylglucosamine transferase from Thiobacillus denitrificans (strain ATCC 25259 / T1).